The chain runs to 465 residues: UDP-N-acetylmuramoylalanine--D-glutamate ligase (465 aa).

127–133 is a binding site for ATP; that stretch reads GSNGKST.

The protein belongs to the MurCDEF family.

It localises to the cytoplasm. It carries out the reaction UDP-N-acetyl-alpha-D-muramoyl-L-alanine + D-glutamate + ATP = UDP-N-acetyl-alpha-D-muramoyl-L-alanyl-D-glutamate + ADP + phosphate + H(+). It functions in the pathway cell wall biogenesis; peptidoglycan biosynthesis. In terms of biological role, cell wall formation. Catalyzes the addition of glutamate to the nucleotide precursor UDP-N-acetylmuramoyl-L-alanine (UMA). The polypeptide is UDP-N-acetylmuramoylalanine--D-glutamate ligase (Cereibacter sphaeroides (strain ATCC 17029 / ATH 2.4.9) (Rhodobacter sphaeroides)).